Here is a 195-residue protein sequence, read N- to C-terminus: Imidazoleglycerol-phosphate dehydratase (195 aa).

The protein belongs to the imidazoleglycerol-phosphate dehydratase family.

The protein resides in the cytoplasm. The enzyme catalyses D-erythro-1-(imidazol-4-yl)glycerol 3-phosphate = 3-(imidazol-4-yl)-2-oxopropyl phosphate + H2O. It participates in amino-acid biosynthesis; L-histidine biosynthesis; L-histidine from 5-phospho-alpha-D-ribose 1-diphosphate: step 6/9. This Jannaschia sp. (strain CCS1) protein is Imidazoleglycerol-phosphate dehydratase.